The primary structure comprises 606 residues: Aspartate--tRNA(Asp/Asn) ligase (606 aa).

E175 is an L-aspartate binding site. The segment at 199–202 is aspartate; sequence QLFK. R221 serves as a coordination point for L-aspartate. Residues 221 to 223 and Q230 contribute to the ATP site; that span reads RDE. H453 contributes to the L-aspartate binding site. E487 serves as a coordination point for ATP. Residue R494 participates in L-aspartate binding. ATP is bound at residue 539–542; sequence GWDR. Residues 564 to 606 are disordered; sequence GGVDPLTDAPGTIPAEQRKETGVDFKPEKAAKAAQGEKAGKES. Residues 579–594 show a composition bias toward basic and acidic residues; sequence EQRKETGVDFKPEKAA.

The protein belongs to the class-II aminoacyl-tRNA synthetase family. Type 1 subfamily. In terms of assembly, homodimer.

It is found in the cytoplasm. The enzyme catalyses tRNA(Asx) + L-aspartate + ATP = L-aspartyl-tRNA(Asx) + AMP + diphosphate. In terms of biological role, aspartyl-tRNA synthetase with relaxed tRNA specificity since it is able to aspartylate not only its cognate tRNA(Asp) but also tRNA(Asn). Reaction proceeds in two steps: L-aspartate is first activated by ATP to form Asp-AMP and then transferred to the acceptor end of tRNA(Asp/Asn). This is Aspartate--tRNA(Asp/Asn) ligase from Corynebacterium aurimucosum (strain ATCC 700975 / DSM 44827 / CIP 107346 / CN-1) (Corynebacterium nigricans).